The sequence spans 84 residues: UPF0153 protein PA1578.1 (84 aa).

The protein belongs to the UPF0153 family.

The sequence is that of UPF0153 protein PA1578.1 from Pseudomonas aeruginosa (strain ATCC 15692 / DSM 22644 / CIP 104116 / JCM 14847 / LMG 12228 / 1C / PRS 101 / PAO1).